A 393-amino-acid polypeptide reads, in one-letter code: E3 ubiquitin-protein transferase RMND5B (393 aa).

An N-acetylmethionine modification is found at M1. A LisH domain is found at 116–148; that stretch reads QQQILQMAIVEHLYQQGMLSVAEELCQESTLNV. A CTLH domain is found at 155-212; sequence PFLELNRILEALHEQDLGPALEWAVSHRQRLLELNSSLEFKLHRLHFIRLLAGGPEKQ. The RING-Gid-type zinc finger occupies 338 to 379; sequence CPILRQQTSDSNPPIKLICGHVISRDALNKLINGGKLKCPYC.

As to quaternary structure, identified in the CTLH complex that contains GID4, RANBP9 and/or RANBP10, MKLN1, MAEA, RMND5A (or alternatively its paralog RMND5B), GID8, ARMC8, WDR26 and YPEL5. Within this complex, MAEA, RMND5A (or alternatively its paralog RMND5B), GID8, WDR26, and RANBP9 and/or RANBP10 form the catalytic core, while GID4, MKLN1, ARMC8 and YPEL5 have ancillary roles.

The protein localises to the cytoplasm. It localises to the cytosol. It catalyses the reaction S-ubiquitinyl-[E2 ubiquitin-conjugating enzyme]-L-cysteine + [acceptor protein]-L-lysine = [E2 ubiquitin-conjugating enzyme]-L-cysteine + N(6)-ubiquitinyl-[acceptor protein]-L-lysine.. Functionally, core component of the CTLH E3 ubiquitin-protein ligase complex that selectively accepts ubiquitin from UBE2H and mediates ubiquitination and subsequent proteasomal degradation of the transcription factor HBP1. MAEA and RMND5A are both required for catalytic activity of the CTLH E3 ubiquitin-protein ligase complex. Catalytic activity of the complex is required for normal cell proliferation. The CTLH E3 ubiquitin-protein ligase complex is not required for the degradation of enzymes involved in gluconeogenesis, such as FBP1. This chain is E3 ubiquitin-protein transferase RMND5B (Rmnd5b), found in Mus musculus (Mouse).